A 301-amino-acid chain; its full sequence is Ribosomal RNA small subunit methyltransferase A (301 aa).

S-adenosyl-L-methionine-binding residues include asparagine 18, leucine 20, glycine 45, glutamate 66, aspartate 91, and asparagine 112. The interval 267–301 (PPEAAPVKEKRRMAKNKMTEPANNNLNENSAPEVD) is disordered. A compositionally biased stretch (polar residues) spans 287-301 (PANNNLNENSAPEVD).

Belongs to the class I-like SAM-binding methyltransferase superfamily. rRNA adenine N(6)-methyltransferase family. RsmA subfamily.

The protein resides in the cytoplasm. The catalysed reaction is adenosine(1518)/adenosine(1519) in 16S rRNA + 4 S-adenosyl-L-methionine = N(6)-dimethyladenosine(1518)/N(6)-dimethyladenosine(1519) in 16S rRNA + 4 S-adenosyl-L-homocysteine + 4 H(+). Specifically dimethylates two adjacent adenosines (A1518 and A1519) in the loop of a conserved hairpin near the 3'-end of 16S rRNA in the 30S particle. May play a critical role in biogenesis of 30S subunits. The polypeptide is Ribosomal RNA small subunit methyltransferase A (Colwellia psychrerythraea (strain 34H / ATCC BAA-681) (Vibrio psychroerythus)).